The primary structure comprises 354 residues: Glucose 1-dehydrogenase (354 aa).

Residues 1 to 27 are disordered; it reads MKVIGVTRDDDGPQLLERERPSPDPGE. A compositionally biased stretch (basic and acidic residues) spans 7–22; the sequence is TRDDDGPQLLERERPS. Aspartate 38 lines the Zn(2+) pocket. Substrate is bound at residue threonine 40. Residues histidine 63 and glutamate 64 each contribute to the Zn(2+) site. The tract at residues 91-110 is disordered; it reads PNGETNEYFRRGEPDMAPDG. The substrate site is built by glutamate 114 and glutamate 150. Residue glutamate 150 participates in Zn(2+) binding. Residues 181–184, 204–205, 269–271, and 298–300 each bind NADP(+); these read NGSL, RR, LGI, and TVN. Residue asparagine 300 coordinates substrate.

The protein belongs to the zinc-containing alcohol dehydrogenase family. Glucose 1-dehydrogenase subfamily. Requires Zn(2+) as cofactor.

The enzyme catalyses D-glucose + NAD(+) = D-glucono-1,5-lactone + NADH + H(+). The catalysed reaction is D-glucose + NADP(+) = D-glucono-1,5-lactone + NADPH + H(+). Functionally, catalyzes the NAD(P)(+)-dependent oxidation of D-glucose to D-gluconate via gluconolactone. Can utilize both NAD(+) and NADP(+) as electron acceptor. Is involved in the degradation of glucose through a modified Entner-Doudoroff pathway. In Haloarcula marismortui (strain ATCC 43049 / DSM 3752 / JCM 8966 / VKM B-1809) (Halobacterium marismortui), this protein is Glucose 1-dehydrogenase.